Reading from the N-terminus, the 165-residue chain is MTERIALFPGSFDPFTKGHLDTVERASRLFDRVIIAVMTNAAKKPLFDGPTKVALIETVIADLDNVSVVAQPKTLTANFAQAVGARYLIRGIRNANDFEYERDIAALNQTQDAQLETVLLLAKQEFSFISSSMVKEIAAFGGQVDQLVPPAVAVALQEKLKHGRD.

A substrate-binding site is contributed by serine 11. ATP is bound by residues 11–12 and histidine 19; that span reads SF. Residues lysine 43, threonine 76, and arginine 90 each coordinate substrate. ATP contacts are provided by residues 91–93, glutamate 101, and 126–132; these read GIR and FSFISSS.

It belongs to the bacterial CoaD family. As to quaternary structure, homohexamer. Requires Mg(2+) as cofactor.

Its subcellular location is the cytoplasm. It carries out the reaction (R)-4'-phosphopantetheine + ATP + H(+) = 3'-dephospho-CoA + diphosphate. It participates in cofactor biosynthesis; coenzyme A biosynthesis; CoA from (R)-pantothenate: step 4/5. Functionally, reversibly transfers an adenylyl group from ATP to 4'-phosphopantetheine, yielding dephospho-CoA (dPCoA) and pyrophosphate. In Latilactobacillus sakei subsp. sakei (strain 23K) (Lactobacillus sakei subsp. sakei), this protein is Phosphopantetheine adenylyltransferase.